The primary structure comprises 25 residues: uncharacterized protein (25 aa).

This is an uncharacterized protein from Ornithodoros (relapsing fever ticks).